The following is a 64-amino-acid chain: MGMRMMFTVFLLVVLATTVVSFPSERASDGRDDTAKDEGSDMDKLVEKKECCNPACGRHYSCGR.

The signal sequence occupies residues 1 to 21 (MGMRMMFTVFLLVVLATTVVS). Positions 22–49 (FPSERASDGRDDTAKDEGSDMDKLVEKK) are excised as a propeptide. Cystine bridges form between cysteine 51–cysteine 56 and cysteine 52–cysteine 62. At cysteine 62 the chain carries Cysteine amide.

The protein belongs to the conotoxin A superfamily. Not hydroxylated; hydroxylation, on a synthetic hydroxylated GI, improves its folding but impairs its activity against target receptors. Expressed by the venom duct.

The protein localises to the secreted. In terms of biological role, alpha-conotoxins act on postsynaptic membranes, they bind to the nicotinic acetylcholine receptors (nAChR) and thus inhibit them. Reversibly inhibits mammalian muscle nAChR (IC(50)=339 nM on adult subtype (alpha-1-beta-1-gamma-delta/CHRNA1-CHRNB1-CHRNG-CHRND) and IC(50)=5.86-995 nM on fetal subtype (alpha-1-beta-1-delta-epsilon/CHRNA1-CHRNB1-CHRND-CHRNE)). The higher affinity site is the alpha/delta site on mouse muscle-derived BC3H-1 receptor, and the other site (alpha/gamma site) on nicotinic receptors from Torpedo californica electric organ. This Conus geographus (Geography cone) protein is Alpha-conotoxin GI.